Consider the following 117-residue polypeptide: UPF0344 protein GWCH70_0687 (117 aa).

Helical transmembrane passes span 2–22 (THAH…AVSL), 32–52 (IVQM…GLLL), 55–75 (IASI…LIGA), and 97–117 (IVAF…FDLF).

This sequence belongs to the UPF0344 family.

It localises to the cell membrane. This chain is UPF0344 protein GWCH70_0687, found in Geobacillus sp. (strain WCH70).